A 139-amino-acid polypeptide reads, in one-letter code: Actin-depolymerizing factor 1 (139 aa).

The ADF-H domain occupies 5-139 (ASGMAVHDDC…GLDVIQSRAN (135 aa)).

This sequence belongs to the actin-binding proteins ADF family.

In terms of biological role, actin-depolymerizing protein. Severs actin filaments (F-actin) and binds to actin monomers. This chain is Actin-depolymerizing factor 1 (ADF1), found in Petunia hybrida (Petunia).